Consider the following 462-residue polypeptide: Elongation factor 1-alpha (462 aa).

Gly-2 is subject to Blocked amino end (Gly). In terms of domain architecture, tr-type G spans 5-242 (KIHINIVVIG…DAILPPSRPT (238 aa)). The interval 14–21 (GHVDSGKS) is G1. Residue 14-21 (GHVDSGKS) participates in GTP binding. N6,N6,N6-trimethyllysine is present on Lys-36. Residue Lys-55 is modified to N6-methyllysine. The G2 stretch occupies residues 70-74 (GITID). Position 79 is an N6,N6,N6-trimethyllysine (Lys-79). The segment at 91 to 94 (DAPG) is G3. GTP-binding positions include 91–95 (DAPGH) and 153–156 (NKMD). Residues 153-156 (NKMD) are G4. Positions 194-196 (SGW) are G5. Lys-219 and Lys-318 each carry N6,N6,N6-trimethyllysine. Glu-374 is modified (5-glutamyl glycerylphosphorylethanolamine).

Belongs to the TRAFAC class translation factor GTPase superfamily. Classic translation factor GTPase family. EF-Tu/EF-1A subfamily. In terms of processing, the N-terminus is blocked.

It localises to the cytoplasm. Its function is as follows. This protein promotes the GTP-dependent binding of aminoacyl-tRNA to the A-site of ribosomes during protein biosynthesis. The polypeptide is Elongation factor 1-alpha (Artemia salina (Brine shrimp)).